A 212-amino-acid polypeptide reads, in one-letter code: Thymidylate kinase (212 aa).

11–18 (GPEGAGKT) is an ATP binding site.

It belongs to the thymidylate kinase family.

It catalyses the reaction dTMP + ATP = dTDP + ADP. In terms of biological role, phosphorylation of dTMP to form dTDP in both de novo and salvage pathways of dTTP synthesis. This chain is Thymidylate kinase, found in Streptococcus pneumoniae (strain CGSP14).